Here is a 1067-residue protein sequence, read N- to C-terminus: Protein CLEC16A homolog (1067 aa).

The region spanning 50-199 (LRCIAEILIW…AVRTISLNVY (150 aa)) is the FPL domain. The helical transmembrane segment at 333 to 353 (SIVALFLLSLVFLVVSHAPLV) threads the bilayer. Over residues 409 to 418 (SSSSYALSED) the composition is skewed to low complexity. Disordered stretches follow at residues 409–434 (SSSSYALSEDSGVESSSPATTELDSQ), 837–861 (ASSSGGSGNSSGSSSRSSHHRPMFS), 876–993 (SNSA…SRSH), and 1037–1067 (QSSEETSFIGSDGNEATGGSEGRRRGAIETV). The span at 421 to 432 (VESSSPATTELD) shows a compositional bias: polar residues. Residues 876–888 (SNSAGVSRTQMAP) are compositionally biased toward polar residues. Positions 917–926 (RADHSDRERS) are enriched in basic and acidic residues. Low complexity predominate over residues 927–947 (PSVSMGSHSSSQSRENSQPRS). Positions 951–974 (RSRESSPRMPRPRSEEIPLEDFQH) are enriched in basic and acidic residues. Over residues 975–993 (SRNNSPHSRGNPSPASRSH) the composition is skewed to polar residues. Positions 1057-1067 (EGRRRGAIETV) are enriched in basic and acidic residues.

The protein belongs to the CLEC16A/gop-1 family. In terms of assembly, interacts with the class C Vps-HOPS complex components; Car, Dor and Vps16a.

It is found in the cytoplasmic vesicle. The protein localises to the autophagosome membrane. The protein resides in the late endosome membrane. It localises to the golgi apparatus membrane. Its function is as follows. Required for mitophagy, autophagy and endosome maturation, possibly by acting in multiple membrane trafficking pathways. Required for endosome trafficking and maturation. Functions with the class C Vps-HOPS complex member Vps16a to promote endosomal maturation into degradative late endosomes and lysosomes. In response to starvation, functions at an early stage of autophagy to promote autophagosome growth and efficient autophagy. Essential for the recruitment of lva-positive Golgi elements to autophagosomes. Likely to function by promoting membrane traffic from the Golgi complex to the developing autophagosomes. Also regulates synaptic growth at the neuromuscular junctions (NMJ) by down-regulating BMP signaling. In Drosophila melanogaster (Fruit fly), this protein is Protein CLEC16A homolog.